The chain runs to 339 residues: UPF0450 protein C17orf58 (339 aa).

The signal sequence occupies residues 1-17; the sequence is MTARAFWLLCLIVGSSP. The interval 17-191 is disordered; sequence PEAPVAERKT…PQRDAEPGAE (175 aa). Residues 21-36 are compositionally biased toward basic and acidic residues; the sequence is VAERKTSPPHSRKPDS. Residues 56–72 are compositionally biased toward low complexity; the sequence is APQRPRAAEVAPAARAW. Residues 112 to 125 are compositionally biased toward basic and acidic residues; sequence ASPRREPASEDAPR. The span at 132–163 shows a compositional bias: low complexity; sequence LRFPAARPPALATEGSAGHAHPNRPRAAALAP. Intrachain disulfides connect C193–C267, C197–C271, and C208–C338. The NTR domain maps to 193–338; sequence CARACRSDLD…QIQGAIHTQC (146 aa).

The protein belongs to the UPF0450 family.

This Homo sapiens (Human) protein is UPF0450 protein C17orf58 (C17orf58).